The primary structure comprises 380 residues: Cytochrome b (380 aa).

The next 4 membrane-spanning stretches (helical) occupy residues 34 to 54 (FGSLLGICLMTQILTGLLLAM), 78 to 99 (WLIRNLHANGASFFFICIYLHI), 114 to 134 (WNTGVMLLLTLMATAFVGYVL), and 179 to 199 (FFALHFLLPFVIAGLTLIHLT). Positions 84 and 98 each coordinate heme b. H183 and H197 together coordinate heme b. Residue H202 participates in a ubiquinone binding. The next 4 helical transmembrane spans lie at 227–247 (LKDILGFMFMLLPLTTLALFS), 289–309 (LGGVLALAASVLILFLVPFLH), 321–341 (LSQLLFWVLVANLLILTWVGS), and 348–368 (FIIIGQLASLTYFTILLILFP).

The protein belongs to the cytochrome b family. The cytochrome bc1 complex contains 11 subunits: 3 respiratory subunits (MT-CYB, CYC1 and UQCRFS1), 2 core proteins (UQCRC1 and UQCRC2) and 6 low-molecular weight proteins (UQCRH/QCR6, UQCRB/QCR7, UQCRQ/QCR8, UQCR10/QCR9, UQCR11/QCR10 and a cleavage product of UQCRFS1). This cytochrome bc1 complex then forms a dimer. It depends on heme b as a cofactor.

The protein localises to the mitochondrion inner membrane. In terms of biological role, component of the ubiquinol-cytochrome c reductase complex (complex III or cytochrome b-c1 complex) that is part of the mitochondrial respiratory chain. The b-c1 complex mediates electron transfer from ubiquinol to cytochrome c. Contributes to the generation of a proton gradient across the mitochondrial membrane that is then used for ATP synthesis. The protein is Cytochrome b (MT-CYB) of Pterodroma hypoleuca (Bonin petrel).